The chain runs to 431 residues: Enolase (431 aa).

A (2R)-2-phosphoglycerate-binding site is contributed by Q166. Residue E208 is the Proton donor of the active site. Mg(2+) is bound by residues D245, E288, and D315. Residues K340, R369, S370, and K391 each coordinate (2R)-2-phosphoglycerate. Residue K340 is the Proton acceptor of the active site.

This sequence belongs to the enolase family. The cofactor is Mg(2+).

Its subcellular location is the cytoplasm. It localises to the secreted. It is found in the cell surface. It carries out the reaction (2R)-2-phosphoglycerate = phosphoenolpyruvate + H2O. The protein operates within carbohydrate degradation; glycolysis; pyruvate from D-glyceraldehyde 3-phosphate: step 4/5. Functionally, catalyzes the reversible conversion of 2-phosphoglycerate (2-PG) into phosphoenolpyruvate (PEP). It is essential for the degradation of carbohydrates via glycolysis. The polypeptide is Enolase (Clostridium botulinum (strain 657 / Type Ba4)).